The primary structure comprises 310 residues: Aspartate carbamoyltransferase catalytic subunit (310 aa).

R58 and T59 together coordinate carbamoyl phosphate. K86 provides a ligand contact to L-aspartate. Residues R108, H136, and Q139 each coordinate carbamoyl phosphate. Residues R169 and R224 each coordinate L-aspartate. G265 and P266 together coordinate carbamoyl phosphate.

Belongs to the aspartate/ornithine carbamoyltransferase superfamily. ATCase family. Heterododecamer (2C3:3R2) of six catalytic PyrB chains organized as two trimers (C3), and six regulatory PyrI chains organized as three dimers (R2).

It carries out the reaction carbamoyl phosphate + L-aspartate = N-carbamoyl-L-aspartate + phosphate + H(+). It participates in pyrimidine metabolism; UMP biosynthesis via de novo pathway; (S)-dihydroorotate from bicarbonate: step 2/3. Catalyzes the condensation of carbamoyl phosphate and aspartate to form carbamoyl aspartate and inorganic phosphate, the committed step in the de novo pyrimidine nucleotide biosynthesis pathway. The polypeptide is Aspartate carbamoyltransferase catalytic subunit (Geobacter sp. (strain M21)).